Reading from the N-terminus, the 737-residue chain is Polyribonucleotide nucleotidyltransferase (737 aa).

Residues Asp-489 and Asp-495 each contribute to the Mg(2+) site. Positions 556 to 615 constitute a KH domain; sequence PKIDTIKIDVDKIKIVIGKGGETIDKIIAETGVKIDIDEEGNVSIYSSDQDAINRAKEII. Positions 625–693 constitute an S1 motif domain; the sequence is DEVYRAKVVR…EKGRIDASMK (69 aa). The disordered stretch occupies residues 691–737; the sequence is SMKALLPRPPKPEHDEKGEKSERPHRPRHQKDYKPKKEFTETPKDSE. The segment covering 700-737 has biased composition (basic and acidic residues); sequence PKPEHDEKGEKSERPHRPRHQKDYKPKKEFTETPKDSE.

Belongs to the polyribonucleotide nucleotidyltransferase family. It depends on Mg(2+) as a cofactor.

The protein localises to the cytoplasm. It catalyses the reaction RNA(n+1) + phosphate = RNA(n) + a ribonucleoside 5'-diphosphate. In terms of biological role, involved in mRNA degradation. Catalyzes the phosphorolysis of single-stranded polyribonucleotides processively in the 3'- to 5'-direction. The polypeptide is Polyribonucleotide nucleotidyltransferase (Streptococcus pneumoniae serotype 2 (strain D39 / NCTC 7466)).